Consider the following 291-residue polypeptide: UDP-N-acetylenolpyruvoylglucosamine reductase (291 aa).

The FAD-binding PCMH-type domain occupies 22 to 187 (RIGGPARYFK…ASATFQLTKD (166 aa)). Residue R166 is part of the active site. C214 (proton donor) is an active-site residue. The active site involves E283.

It belongs to the MurB family. FAD serves as cofactor.

The protein resides in the cytoplasm. It carries out the reaction UDP-N-acetyl-alpha-D-muramate + NADP(+) = UDP-N-acetyl-3-O-(1-carboxyvinyl)-alpha-D-glucosamine + NADPH + H(+). Its pathway is cell wall biogenesis; peptidoglycan biosynthesis. Its function is as follows. Cell wall formation. The protein is UDP-N-acetylenolpyruvoylglucosamine reductase of Chlamydia trachomatis serovar A (strain ATCC VR-571B / DSM 19440 / HAR-13).